The following is a 289-amino-acid chain: Probable endonuclease 4 (289 aa).

Residues histidine 75, histidine 115, glutamate 153, aspartate 187, histidine 190, histidine 224, aspartate 237, histidine 239, and glutamate 269 each contribute to the Zn(2+) site.

The protein belongs to the AP endonuclease 2 family. Zn(2+) is required as a cofactor.

It carries out the reaction Endonucleolytic cleavage to 5'-phosphooligonucleotide end-products.. Its function is as follows. Endonuclease IV plays a role in DNA repair. It cleaves phosphodiester bonds at apurinic or apyrimidinic (AP) sites, generating a 3'-hydroxyl group and a 5'-terminal sugar phosphate. This Chlamydia abortus (strain DSM 27085 / S26/3) (Chlamydophila abortus) protein is Probable endonuclease 4.